Reading from the N-terminus, the 1051-residue chain is Putative helicase/primase complex protein (1051 aa).

This sequence belongs to the asfivirus F1055L family.

Its function is as follows. May be involved in DNA replication. This is Putative helicase/primase complex protein from Ornithodoros (relapsing fever ticks).